We begin with the raw amino-acid sequence, 72 residues long: Probable protein transport protein Sec61 subunit gamma (72 aa).

Topologically, residues M1–H40 are cytoplasmic. The helical transmembrane segment at A41–I61 threads the bilayer. Over N62–E72 the chain is Extracellular.

This sequence belongs to the SecE/SEC61-gamma family. As to quaternary structure, heterotrimeric complex composed of SEC61-alpha, SEC61-beta and SEC61-gamma.

It is found in the endoplasmic reticulum membrane. Necessary for protein translocation in the endoplasmic reticulum. The sequence is that of Probable protein transport protein Sec61 subunit gamma from Encephalitozoon cuniculi (strain GB-M1) (Microsporidian parasite).